Here is a 356-residue protein sequence, read N- to C-terminus: UDP-3-O-acylglucosamine N-acyltransferase (356 aa).

The active-site Proton acceptor is the H251.

Belongs to the transferase hexapeptide repeat family. LpxD subfamily. As to quaternary structure, homotrimer.

It catalyses the reaction a UDP-3-O-[(3R)-3-hydroxyacyl]-alpha-D-glucosamine + a (3R)-hydroxyacyl-[ACP] = a UDP-2-N,3-O-bis[(3R)-3-hydroxyacyl]-alpha-D-glucosamine + holo-[ACP] + H(+). Its pathway is bacterial outer membrane biogenesis; LPS lipid A biosynthesis. Functionally, catalyzes the N-acylation of UDP-3-O-acylglucosamine using 3-hydroxyacyl-ACP as the acyl donor. Is involved in the biosynthesis of lipid A, a phosphorylated glycolipid that anchors the lipopolysaccharide to the outer membrane of the cell. The chain is UDP-3-O-acylglucosamine N-acyltransferase from Ralstonia nicotianae (strain ATCC BAA-1114 / GMI1000) (Ralstonia solanacearum).